Consider the following 250-residue polypeptide: NADH-quinone oxidoreductase subunit C (250 aa).

It belongs to the complex I 30 kDa subunit family. In terms of assembly, NDH-1 is composed of 14 different subunits. Subunits NuoB, C, D, E, F, and G constitute the peripheral sector of the complex.

The protein localises to the cell inner membrane. It catalyses the reaction a quinone + NADH + 5 H(+)(in) = a quinol + NAD(+) + 4 H(+)(out). In terms of biological role, NDH-1 shuttles electrons from NADH, via FMN and iron-sulfur (Fe-S) centers, to quinones in the respiratory chain. The immediate electron acceptor for the enzyme in this species is believed to be ubiquinone. Couples the redox reaction to proton translocation (for every two electrons transferred, four hydrogen ions are translocated across the cytoplasmic membrane), and thus conserves the redox energy in a proton gradient. The polypeptide is NADH-quinone oxidoreductase subunit C (Xanthomonas oryzae pv. oryzae (strain PXO99A)).